Consider the following 1189-residue polypeptide: Ras-specific guanine nucleotide-releasing factor 2 (1189 aa).

The 112-residue stretch at 22-133 (EGTKRGFLSK…WMEAIHQASY (112 aa)) folds into the PH 1 domain. Positions 158-193 (KIATNQLRHQLEDQDTEIERLKSEIVALNKTKERMR) form a coiled coil. An IQ domain is found at 205-234 (DIKKIKKVQSFMRGWLCRRKWKTIVQDYIC). Residues 243–429 (KRNQIVFTMV…EELSRVMHDE (187 aa)) form the DH domain. The PH 2 domain maps to 470–588 (PSVERGKLSK…WMSDISQCVD (119 aa)). Residues 635 to 755 (KVPQIRYASV…LTSSLNSRIG (121 aa)) enclose the N-terminal Ras-GEF domain. A disordered region spans residues 713–738 (VDGKSPRLCRKFSSPPPLAVSRTSSP). Serine 725 and serine 726 each carry phosphoserine. Serine 736 carries the post-translational modification Phosphoserine; by CDK5. Residues 743-751 (KLSLTSSLN) are regulates proteasomal degradation. Serine 745 and serine 749 each carry phosphoserine. The segment at 757–817 (LDLTNSSSSS…TPRHLRYRQP (61 aa)) is disordered. Over residues 762 to 776 (SSSSSSPTTTTHSPA) the composition is skewed to low complexity. Residues serine 801, serine 805, and serine 924 each carry the phosphoserine modification. Positions 954–1186 (SAMELAEQIT…YELSLKIEPR (233 aa)) constitute a Ras-GEF domain. Positions 1051 to 1080 (ALNRSAIYRLKKTWAKVSKQTKALMDKLQK) are responsible of the affinity for farnesylated versus geranylgeranylated Ras.

Homooligomer and heterooligomer with RASGRF1. Interacts with Ras and RAC1. Interacts in a calcium-dependent manner with calmodulin. Interacts with EPB49 and probably CDK5R1. Interacts with the AMPA receptor through GRIA1. Interacts with microtubules. In terms of processing, phosphorylated by CDK5; down-regulates RASGRF2-mediated RAC1 activation. Ubiquitinated upon interaction with Ras. Ubiquitination leads to degradation through the 26S proteasome. As to expression, expressed in brain in the nucleus of the solitary tract. Not observed in the hippocampus (at protein level).

It is found in the cytoplasm. The protein localises to the cell membrane. The protein resides in the endoplasmic reticulum membrane. Functionally, functions as a calcium-regulated nucleotide exchange factor activating both Ras and RAC1 through the exchange of bound GDP for GTP. Preferentially activates HRAS in vivo compared to RRAS based on their different types of prenylation. Functions in synaptic plasticity by contributing to the induction of long term potentiation. This chain is Ras-specific guanine nucleotide-releasing factor 2 (Rasgrf2), found in Mus musculus (Mouse).